The chain runs to 118 residues: Large ribosomal subunit protein uL18 (118 aa).

Residues 1–25 are disordered; sequence MISKPDKNKIRQKRHRRVRGKLSGT. Basic residues predominate over residues 10–20; sequence IRQKRHRRVRG.

The protein belongs to the universal ribosomal protein uL18 family. Part of the 50S ribosomal subunit; part of the 5S rRNA/L5/L18/L25 subcomplex. Contacts the 5S and 23S rRNAs.

This is one of the proteins that bind and probably mediate the attachment of the 5S RNA into the large ribosomal subunit, where it forms part of the central protuberance. This Streptococcus pyogenes serotype M5 (strain Manfredo) protein is Large ribosomal subunit protein uL18.